A 416-amino-acid chain; its full sequence is Coenzyme F420H(2) oxidase (416 aa).

His87, Glu89, Asp91, His92, His155, Asp174, and His239 together coordinate Fe cation. The 142-residue stretch at 266-407 (AVIVYDTMHY…NCYNMGKELA (142 aa)) folds into the Flavodoxin-like domain. FMN is bound by residues 272-277 (TMHYST), 324-327 (TIYD), and 359-364 (SMGGEG).

It in the N-terminal section; belongs to the zinc metallo-hydrolase group 3 family. FMN is required as a cofactor. Fe cation serves as cofactor.

It catalyses the reaction 2 reduced coenzyme F420-(gamma-L-Glu)(n) + O2 = 2 oxidized coenzyme F420-(gamma-L-Glu)(n) + 2 H2O + 2 H(+). Functionally, catalyzes the oxidation of F420H(2) with O(2). May be involved in O(2) detoxification, reducing the intracellular O(2) concentration to a level allowing growth at the expense of methane formation. The polypeptide is Coenzyme F420H(2) oxidase (fprA) (Methanocaldococcus jannaschii (strain ATCC 43067 / DSM 2661 / JAL-1 / JCM 10045 / NBRC 100440) (Methanococcus jannaschii)).